The following is a 499-amino-acid chain: Maturase K (499 aa).

This sequence belongs to the intron maturase 2 family. MatK subfamily.

It localises to the plastid. Its subcellular location is the chloroplast. Its function is as follows. Usually encoded in the trnK tRNA gene intron. Probably assists in splicing its own and other chloroplast group II introns. This chain is Maturase K, found in Batis maritima (Maritime saltwort).